Reading from the N-terminus, the 546-residue chain is Adenine DNA glycosylase (546 aa).

The segment at 19–51 (RAAVGSGHRKQAASQEGRQKHAKNNSQAKPSAC) is disordered. Glu-131 acts as the Proton donor/acceptor in catalysis. The [4Fe-4S] cluster site is built by Cys-287, Cys-294, Cys-297, and Cys-303. The region spanning 364-495 (PREESSATCV…AMKKVFRVYQ (132 aa)) is the Nudix hydrolase domain. The short motif at 404–426 (VTWEPSEQLQRKALLQELQRWAG) is the Nudix box element.

Belongs to the Nth/MutY family. [4Fe-4S] cluster serves as cofactor.

It localises to the nucleus. Its subcellular location is the mitochondrion. It carries out the reaction Hydrolyzes free adenine bases from 7,8-dihydro-8-oxoguanine:adenine mismatched double-stranded DNA, leaving an apurinic site.. Functionally, involved in oxidative DNA damage repair. Initiates repair of A*oxoG to C*G by removing the inappropriately paired adenine base from the DNA backbone. Possesses both adenine and 2-OH-A DNA glycosylase activities. The polypeptide is Adenine DNA glycosylase (MUTYH) (Homo sapiens (Human)).